Reading from the N-terminus, the 156-residue chain is ATP synthase subunit b (156 aa).

Residues Val-12–Ala-32 form a helical membrane-spanning segment.

This sequence belongs to the ATPase B chain family. In terms of assembly, F-type ATPases have 2 components, F(1) - the catalytic core - and F(0) - the membrane proton channel. F(1) has five subunits: alpha(3), beta(3), gamma(1), delta(1), epsilon(1). F(0) has three main subunits: a(1), b(2) and c(10-14). The alpha and beta chains form an alternating ring which encloses part of the gamma chain. F(1) is attached to F(0) by a central stalk formed by the gamma and epsilon chains, while a peripheral stalk is formed by the delta and b chains.

The protein resides in the cell inner membrane. Its function is as follows. F(1)F(0) ATP synthase produces ATP from ADP in the presence of a proton or sodium gradient. F-type ATPases consist of two structural domains, F(1) containing the extramembraneous catalytic core and F(0) containing the membrane proton channel, linked together by a central stalk and a peripheral stalk. During catalysis, ATP synthesis in the catalytic domain of F(1) is coupled via a rotary mechanism of the central stalk subunits to proton translocation. Functionally, component of the F(0) channel, it forms part of the peripheral stalk, linking F(1) to F(0). This is ATP synthase subunit b from Pseudomonas putida (strain ATCC 700007 / DSM 6899 / JCM 31910 / BCRC 17059 / LMG 24140 / F1).